Consider the following 429-residue polypeptide: Light-independent protochlorophyllide reductase subunit N (429 aa).

Positions 32, 57, and 118 each coordinate [4Fe-4S] cluster.

This sequence belongs to the BchN/ChlN family. As to quaternary structure, protochlorophyllide reductase is composed of three subunits; BchL, BchN and BchB. Forms a heterotetramer of two BchB and two BchN subunits. It depends on [4Fe-4S] cluster as a cofactor.

The enzyme catalyses chlorophyllide a + oxidized 2[4Fe-4S]-[ferredoxin] + 2 ADP + 2 phosphate = protochlorophyllide a + reduced 2[4Fe-4S]-[ferredoxin] + 2 ATP + 2 H2O. It functions in the pathway porphyrin-containing compound metabolism; bacteriochlorophyll biosynthesis (light-independent). Component of the dark-operative protochlorophyllide reductase (DPOR) that uses Mg-ATP and reduced ferredoxin to reduce ring D of protochlorophyllide (Pchlide) to form chlorophyllide a (Chlide). This reaction is light-independent. The NB-protein (BchN-BchB) is the catalytic component of the complex. This Rhodopseudomonas palustris (strain TIE-1) protein is Light-independent protochlorophyllide reductase subunit N.